The following is a 217-amino-acid chain: CASP-like protein UU4 (217 aa).

Residues 1–11 (MYTGQSDHRPE) show a composition bias toward basic and acidic residues. The disordered stretch occupies residues 1-21 (MYTGQSDHRPEGVGVNPGSPN). The Cytoplasmic segment spans residues 1–61 (MYTGQSDHRP…VKKNINHMSG (61 aa)). A helical membrane pass occupies residues 62-82 (LSLGLRVSEFVLSVIAFSLMA). Residues 83–98 (SAEQNGAVYSTFTSYS) are Extracellular-facing. The helical transmembrane segment at 99 to 119 (FVLAINVLVALYAIGQIILSV) threads the bilayer. Topologically, residues 120-141 (MPLVSGSAPKKLYLFITFGCDQ) are cytoplasmic. The chain crosses the membrane as a helical span at residues 142–162 (LSAFLLMAAGAAGASVAMLIN). The Extracellular portion of the chain corresponds to 163–187 (RKGVIDDYGSGCIDGKITVFCAHAE). A helical membrane pass occupies residues 188–208 (ASIAFTFLSFFCVMISSYLGV). At 209 to 217 (YNLAPYLIL) the chain is on the cytoplasmic side.

This sequence belongs to the Casparian strip membrane proteins (CASP) family. In terms of assembly, homodimer and heterodimers.

It localises to the cell membrane. The polypeptide is CASP-like protein UU4 (Physcomitrium patens (Spreading-leaved earth moss)).